A 238-amino-acid chain; its full sequence is Large ribosomal subunit protein uL2 (238 aa).

The disordered stretch occupies residues H200–K238. A compositionally biased stretch (polar residues) spans Q206–R216. Over residues K223–K238 the composition is skewed to basic residues.

This sequence belongs to the universal ribosomal protein uL2 family. In terms of assembly, part of the 50S ribosomal subunit. Forms a bridge to the 30S subunit in the 70S ribosome.

In terms of biological role, one of the primary rRNA binding proteins. Required for association of the 30S and 50S subunits to form the 70S ribosome, for tRNA binding and peptide bond formation. It has been suggested to have peptidyltransferase activity; this is somewhat controversial. Makes several contacts with the 16S rRNA in the 70S ribosome. The protein is Large ribosomal subunit protein uL2 of Saccharolobus islandicus (strain Y.N.15.51 / Yellowstone #2) (Sulfolobus islandicus).